The chain runs to 436 residues: Trigger factor (436 aa).

The PPIase FKBP-type domain occupies 161–246 (DDQLNIDFVG…VNSVSEPKLP (86 aa)).

It belongs to the FKBP-type PPIase family. Tig subfamily.

Its subcellular location is the cytoplasm. It catalyses the reaction [protein]-peptidylproline (omega=180) = [protein]-peptidylproline (omega=0). In terms of biological role, involved in protein export. Acts as a chaperone by maintaining the newly synthesized protein in an open conformation. Functions as a peptidyl-prolyl cis-trans isomerase. The polypeptide is Trigger factor (Pseudomonas fluorescens (strain ATCC BAA-477 / NRRL B-23932 / Pf-5)).